The following is a 71-amino-acid chain: MRTEQITARALKQVGDDRYKLSLIVAKRAEALANGAIALVDADTSKMKFADIALLEVAEGKIGLEAIVEGK.

This sequence belongs to the RNA polymerase subunit omega family. As to quaternary structure, the RNAP catalytic core consists of 2 alpha, 1 beta, 1 beta' and 1 omega subunit. When a sigma factor is associated with the core the holoenzyme is formed, which can initiate transcription.

It carries out the reaction RNA(n) + a ribonucleoside 5'-triphosphate = RNA(n+1) + diphosphate. In terms of biological role, promotes RNA polymerase assembly. Latches the N- and C-terminal regions of the beta' subunit thereby facilitating its interaction with the beta and alpha subunits. This chain is DNA-directed RNA polymerase subunit omega, found in Campylobacter concisus (strain 13826).